The following is a 513-amino-acid chain: ATP synthase subunit alpha (513 aa).

An ATP-binding site is contributed by 169–176; it reads GDRQTGKT.

Belongs to the ATPase alpha/beta chains family. As to quaternary structure, F-type ATPases have 2 components, CF(1) - the catalytic core - and CF(0) - the membrane proton channel. CF(1) has five subunits: alpha(3), beta(3), gamma(1), delta(1), epsilon(1). CF(0) has three main subunits: a(1), b(2) and c(9-12). The alpha and beta chains form an alternating ring which encloses part of the gamma chain. CF(1) is attached to CF(0) by a central stalk formed by the gamma and epsilon chains, while a peripheral stalk is formed by the delta and b chains.

It localises to the cell inner membrane. The enzyme catalyses ATP + H2O + 4 H(+)(in) = ADP + phosphate + 5 H(+)(out). Produces ATP from ADP in the presence of a proton gradient across the membrane. The alpha chain is a regulatory subunit. This is ATP synthase subunit alpha from Bordetella pertussis (strain Tohama I / ATCC BAA-589 / NCTC 13251).